Here is a 324-residue protein sequence, read N- to C-terminus: Large ribosomal subunit protein uL3m (324 aa).

Residues 1 to 41 constitute a mitochondrion transit peptide; it reads MAAVPRGLLSRINQFLSIRSITPSSSESLPHCSSFFLIRRF. A disordered region spans residues 206 to 229; it reads PASHGASLSHRSGGSTGQRDAPGK.

It belongs to the universal ribosomal protein uL3 family. Part of the 50S ribosomal subunit.

It localises to the mitochondrion. In terms of biological role, one of the primary rRNA binding proteins, it binds directly near the 3'-end of the 23S rRNA, where it nucleates assembly of the 50S subunit. The polypeptide is Large ribosomal subunit protein uL3m (Arabidopsis thaliana (Mouse-ear cress)).